We begin with the raw amino-acid sequence, 951 residues long: Bifunctional glutamine synthetase adenylyltransferase/adenylyl-removing enzyme (951 aa).

Positions 1 to 445 (MSILPLPALP…VFDELIGDDA (445 aa)) are adenylyl removase. Residues 454–951 (HSSYSSLWQD…VSWNKWLMGA (498 aa)) are adenylyl transferase.

Belongs to the GlnE family. Mg(2+) is required as a cofactor.

The catalysed reaction is [glutamine synthetase]-O(4)-(5'-adenylyl)-L-tyrosine + phosphate = [glutamine synthetase]-L-tyrosine + ADP. The enzyme catalyses [glutamine synthetase]-L-tyrosine + ATP = [glutamine synthetase]-O(4)-(5'-adenylyl)-L-tyrosine + diphosphate. In terms of biological role, involved in the regulation of glutamine synthetase GlnA, a key enzyme in the process to assimilate ammonia. When cellular nitrogen levels are high, the C-terminal adenylyl transferase (AT) inactivates GlnA by covalent transfer of an adenylyl group from ATP to specific tyrosine residue of GlnA, thus reducing its activity. Conversely, when nitrogen levels are low, the N-terminal adenylyl removase (AR) activates GlnA by removing the adenylyl group by phosphorolysis, increasing its activity. The regulatory region of GlnE binds the signal transduction protein PII (GlnB) which indicates the nitrogen status of the cell. This is Bifunctional glutamine synthetase adenylyltransferase/adenylyl-removing enzyme from Pectobacterium atrosepticum (strain SCRI 1043 / ATCC BAA-672) (Erwinia carotovora subsp. atroseptica).